Consider the following 285-residue polypeptide: Bifunctional protein FolD (285 aa).

Residues 165–167 (GRS) and Ser190 each bind NADP(+).

Belongs to the tetrahydrofolate dehydrogenase/cyclohydrolase family. In terms of assembly, homodimer.

The catalysed reaction is (6R)-5,10-methylene-5,6,7,8-tetrahydrofolate + NADP(+) = (6R)-5,10-methenyltetrahydrofolate + NADPH. It catalyses the reaction (6R)-5,10-methenyltetrahydrofolate + H2O = (6R)-10-formyltetrahydrofolate + H(+). It functions in the pathway one-carbon metabolism; tetrahydrofolate interconversion. Catalyzes the oxidation of 5,10-methylenetetrahydrofolate to 5,10-methenyltetrahydrofolate and then the hydrolysis of 5,10-methenyltetrahydrofolate to 10-formyltetrahydrofolate. The sequence is that of Bifunctional protein FolD from Burkholderia pseudomallei (strain 1106a).